We begin with the raw amino-acid sequence, 152 residues long: MGLSTLEQKLTELISAPVEALGYELVGIEFVRGRTSTLRIYIDSEDGINVDDCADVSHQVSAVMDVEDPITVAYNLEVSSPGLDRPMFTAEHYARFTGEEVSLVLRMAVQNRRKWQGIIKSVEGEMITVAVEGNDEVFALSNIQKANLVPHF.

This sequence belongs to the RimP family.

It is found in the cytoplasm. Its function is as follows. Required for maturation of 30S ribosomal subunits. The chain is Ribosome maturation factor RimP from Erwinia tasmaniensis (strain DSM 17950 / CFBP 7177 / CIP 109463 / NCPPB 4357 / Et1/99).